The following is a 213-amino-acid chain: tRNA (guanine-N(7)-)-methyltransferase (213 aa).

The S-adenosyl-L-methionine site is built by Glu-44, Asp-69, Asp-96, and Asp-118. Asp-118 is a catalytic residue. Lys-122 lines the substrate pocket. Residues 124 to 129 (RHEKRR) form an interaction with RNA region. Residues Asp-154 and 191 to 194 (TEYE) contribute to the substrate site.

This sequence belongs to the class I-like SAM-binding methyltransferase superfamily. TrmB family.

The catalysed reaction is guanosine(46) in tRNA + S-adenosyl-L-methionine = N(7)-methylguanosine(46) in tRNA + S-adenosyl-L-homocysteine. Its pathway is tRNA modification; N(7)-methylguanine-tRNA biosynthesis. Functionally, catalyzes the formation of N(7)-methylguanine at position 46 (m7G46) in tRNA. This chain is tRNA (guanine-N(7)-)-methyltransferase, found in Streptococcus thermophilus (strain CNRZ 1066).